Reading from the N-terminus, the 558-residue chain is Inositol-3-phosphate synthase 1 (558 aa).

NAD(+)-binding residues include Gly67, Gly68, Asn69, Asn70, Asp141, Ser177, Val178, Gln188, Arg191, Thr228, Ala229, Asn230, Thr231, Gly278, Ser279, Asp303, Ser306, Asn337, Asn338, Asp339, and Lys352. Ser279 bears the Phosphoserine mark. At Ser357 the chain carries Phosphoserine. Gly390, Asp391, Asp419, and Ser420 together coordinate NAD(+). The tract at residues 537–558 (ATNGCTGDANGHLQEEPPMPTT) is disordered.

It belongs to the myo-inositol 1-phosphate synthase family. NAD(+) serves as cofactor. Phosphorylation at Ser-279 and Ser-357 may be associated with a decrease in activity. Highly expressed in testis, ovary, heart, placenta and pancreas. Weakly expressed in blood leukocyte, thymus, skeletal muscle and colon.

It localises to the cytoplasm. The enzyme catalyses D-glucose 6-phosphate = 1D-myo-inositol 3-phosphate. It participates in polyol metabolism; myo-inositol biosynthesis; myo-inositol from D-glucose 6-phosphate: step 1/2. Inhibited by mood-stabilizing drugs such as valproate (VPA) and lithium. Functionally, key enzyme in myo-inositol biosynthesis pathway that catalyzes the conversion of glucose 6-phosphate to 1-myo-inositol 1-phosphate in a NAD-dependent manner. Rate-limiting enzyme in the synthesis of all inositol-containing compounds. This is Inositol-3-phosphate synthase 1 (ISYNA1) from Homo sapiens (Human).